Reading from the N-terminus, the 220-residue chain is Uracil-DNA glycosylase (220 aa).

Aspartate 65 acts as the Proton acceptor in catalysis.

It belongs to the uracil-DNA glycosylase (UDG) superfamily. UNG family.

It localises to the cytoplasm. It catalyses the reaction Hydrolyzes single-stranded DNA or mismatched double-stranded DNA and polynucleotides, releasing free uracil.. Excises uracil residues from the DNA which can arise as a result of misincorporation of dUMP residues by DNA polymerase or due to deamination of cytosine. The protein is Uracil-DNA glycosylase of Azobacteroides pseudotrichonymphae genomovar. CFP2.